The primary structure comprises 372 residues: Meiotic drive suppressor wtf18 (372 aa).

6 helical membrane passes run 86-106, 120-140, 153-173, 197-217, 233-253, and 257-277; these read FLLRLLISVLAVSVVFFTAWV, AFSVTIGITCPILFIATFCFF, VTVIFLAQCVKVTVIFLAQCV, DLVVTIWLAWVVICFILFGCV, CSISAALFFILLLVCIPIWTL, and LFGLFQVLGVQSCVVIVTKGL.

It belongs to the WTF family. As to quaternary structure, homomer. Interacts with other proteins that exhibit high sequence similarity.

It is found in the spore membrane. Its subcellular location is the vacuole membrane. Functionally, acts as a suppressor component of the dual wtf meiotic drive system, and can suppress but not confer meiotic drive by compatible poisons. Wtf meiotic drive systems promote unequal transmission of alleles from the parental zygote to progeny spores by encoding a poison and an antidote from the same locus; the poison is trans-acting and forms toxic aggregates in all spores within an ascus, wherease the antidote is spore-specific and targets aggregates for degradation by the vacuole. Meiotic drive by wtf systems therefore lead to poisoning of all progeny that do not inherit the dual poison/antidote allele, or express a compatible antidote. This is Meiotic drive suppressor wtf18 from Schizosaccharomyces pombe (strain 972 / ATCC 24843) (Fission yeast).